A 225-amino-acid chain; its full sequence is Cytidylate kinase (225 aa).

12–20 (GPSGAGKGT) contacts ATP.

It belongs to the cytidylate kinase family. Type 1 subfamily.

It is found in the cytoplasm. The enzyme catalyses CMP + ATP = CDP + ADP. It catalyses the reaction dCMP + ATP = dCDP + ADP. The chain is Cytidylate kinase from Pectobacterium carotovorum subsp. carotovorum (strain PC1).